The sequence spans 158 residues: GTP-dependent dephospho-CoA kinase (158 aa).

GTP is bound by residues Asp35, Val36, Asp54, Lys56, Glu109, and Asp132.

It belongs to the GTP-dependent DPCK family.

It carries out the reaction 3'-dephospho-CoA + GTP = GDP + CoA + H(+). Its pathway is cofactor biosynthesis; coenzyme A biosynthesis. Its function is as follows. Catalyzes the GTP-dependent phosphorylation of the 3'-hydroxyl group of dephosphocoenzyme A to form coenzyme A (CoA). The chain is GTP-dependent dephospho-CoA kinase from Methanococcus maripaludis (strain C7 / ATCC BAA-1331).